Consider the following 577-residue polypeptide: MRGFTYLSKVLHSHSSYSKLLVLCSVSTGGLLVYAESNVESGKQVVEQNQPESKKKRVVVLGTGWGGTSFLKDVDISSYDVQVVSPRNYFAFTPLLPSVTCGTVEARSIVEPVRNIIKKRSGEIQFWEAECLKIDPVNRTVSCRSGINDNLAGHNDFSLQYDYLVVAVGAQVNTFNTPGVMEHCHFLKEVEDAQRIRRTVIDCFEKSVIPGLSEEERRTNLHFVIVGGGPTGVEFAAELHDYVYEDLVKIYPSVKDFVKITVIQSGDHILNTFDERISSFAEQKFQRDGIEVSTGCRVTSVSDHFINMKVKSTGKHVEVPYGMVVWSTGVGTRPFVKDFMEQVGQEKRRILATDEWLRVKGCSNVYALGDCASVDQHKVMEDISTIFEAADKDDSGTLSVEEFRDVLEDIIIRYPQVDLYLKNKHLLEAKDLFRDSEGNEREEVDIEGFKLALSHVDSQMKSLPATAQVAAQQGTYLARCLNRWDQCKSNPEGPRRFKSSGRHEFLPFEYRHLGQFAPLGGDQAAAELPGDWVSMGHSTQWLWYSVYASKQVSWRTRYLVVGDWVRRYIFGRDSSRI.

A mitochondrion-targeting transit peptide spans 1–35; the sequence is MRGFTYLSKVLHSHSSYSKLLVLCSVSTGGLLVYA. An FAD-binding site is contributed by 57-87; sequence RVVVLGTGWGGTSFLKDVDISSYDVQVVSPR. An NAD(+)-binding site is contributed by 221 to 257; it reads LHFVIVGGGPTGVEFAAELHDYVYEDLVKIYPSVKDF. Positions 378-413 constitute an EF-hand domain; the sequence is KVMEDISTIFEAADKDDSGTLSVEEFRDVLEDIIIR. Ca(2+) is bound by residues Asp391, Asp393, Ser395, Thr397, and Glu402. Positions 568 to 577 match the Microbody targeting signal motif; that stretch reads YIFGRDSSRI.

This sequence belongs to the NADH dehydrogenase family. It depends on FAD as a cofactor.

The protein localises to the mitochondrion inner membrane. Its subcellular location is the peroxisome. It carries out the reaction a quinone + NADH + H(+) = a quinol + NAD(+). It catalyses the reaction a ubiquinone + NADH + H(+) = a ubiquinol + NAD(+). With respect to regulation, activity is calcium-dependent with a more pronounced effect at higher pH. In terms of biological role, calcium-dependent NAD(P)H dehydrogenase. Binds calcium ions. Alternative NADH-ubiquinone oxidoreductase which catalyzes the oxidation of mitochondrial NADH does not translocate protons across the inner mitochondrial membrane. In Solanum tuberosum (Potato), this protein is External alternative NAD(P)H-ubiquinone oxidoreductase B1, mitochondrial (NDB1).